The primary structure comprises 121 residues: Large ribosomal subunit protein bL19 (121 aa).

The protein belongs to the bacterial ribosomal protein bL19 family.

This protein is located at the 30S-50S ribosomal subunit interface and may play a role in the structure and function of the aminoacyl-tRNA binding site. In Neisseria meningitidis serogroup C (strain 053442), this protein is Large ribosomal subunit protein bL19.